The sequence spans 118 residues: Large ribosomal subunit protein bL19 (118 aa).

It belongs to the bacterial ribosomal protein bL19 family.

Functionally, this protein is located at the 30S-50S ribosomal subunit interface and may play a role in the structure and function of the aminoacyl-tRNA binding site. The protein is Large ribosomal subunit protein bL19 of Campylobacter curvus (strain 525.92).